Consider the following 142-residue polypeptide: Putative pre-16S rRNA nuclease (142 aa).

It belongs to the YqgF nuclease family.

The protein resides in the cytoplasm. Could be a nuclease involved in processing of the 5'-end of pre-16S rRNA. The sequence is that of Putative pre-16S rRNA nuclease from Nitratidesulfovibrio vulgaris (strain DSM 19637 / Miyazaki F) (Desulfovibrio vulgaris).